The sequence spans 415 residues: MMASDGHPGPPSVTPGSPLSAGGREWQGMAGSCWNITYVQDSVGPATSTLMFVAGVVGNGLALGILGARRRSHPSAFAVLVTGLAVTDLLGTCFLSPAVFVAYARNSSLLGLAHGGTMLCDTFAFAMTFFGLASTLILFAMAVERCLALSHPYLYAQLDGPRCARFALPSIYAFCCLFCSLPLLGLGEHQQYCPGSWCFIRMRSAQPGGCAFSLAYASLMALLVTSIFFCNGSVTLSLYHMYRQQRRHHGSFVPTSRAREDEVYHLILLALMTVIMAVCSLPLMIRGFTQAIAPDSREMGDLLAFRFNAFNPILDPWVFILFRKAVFQRLKFWLCCLCARSVHGDLQAPLSRPASGRRDPPAPTSLQAKEGSWVPLSSWGTGQVAPLTAVPLTGGDGCSVGMPSKSEAIAACSLC.

A disordered region spans residues 1 to 21 (MMASDGHPGPPSVTPGSPLSA). The Extracellular portion of the chain corresponds to 1-44 (MMASDGHPGPPSVTPGSPLSAGGREWQGMAGSCWNITYVQDSVG). 2 disulfide bridges follow: Cys-33–Cys-193 and Cys-120–Cys-198. Asn-35 is a glycosylation site (N-linked (GlcNAc...) asparagine). A helical transmembrane segment spans residues 45-66 (PATSTLMFVAGVVGNGLALGIL). The Cytoplasmic portion of the chain corresponds to 67 to 79 (GARRRSHPSAFAV). Residues 80 to 104 (LVTGLAVTDLLGTCFLSPAVFVAYA) form a helical membrane-spanning segment. Residues 105 to 122 (RNSSLLGLAHGGTMLCDT) are Extracellular-facing. Residues 123–143 (FAFAMTFFGLASTLILFAMAV) traverse the membrane as a helical segment. Residues 144 to 162 (ERCLALSHPYLYAQLDGPR) lie on the Cytoplasmic side of the membrane. A helical transmembrane segment spans residues 163–186 (CARFALPSIYAFCCLFCSLPLLGL). Over 187 to 215 (GEHQQYCPGSWCFIRMRSAQPGGCAFSLA) the chain is Extracellular. The chain crosses the membrane as a helical span at residues 216–236 (YASLMALLVTSIFFCNGSVTL). Over 237–263 (SLYHMYRQQRRHHGSFVPTSRAREDEV) the chain is Cytoplasmic. The helical transmembrane segment at 264-288 (YHLILLALMTVIMAVCSLPLMIRGF) threads the bilayer. Residues 289–301 (TQAIAPDSREMGD) are Extracellular-facing. The chain crosses the membrane as a helical span at residues 302-322 (LLAFRFNAFNPILDPWVFILF). The Cytoplasmic portion of the chain corresponds to 323–415 (RKAVFQRLKF…SEAIAACSLC (93 aa)). The tract at residues 349-370 (PLSRPASGRRDPPAPTSLQAKE) is disordered. Ser-365 bears the Phosphoserine mark. Cys-412 is subject to Cysteine methyl ester. Cys-412 carries the S-farnesyl cysteine lipid modification. A propeptide spans 413–415 (SLC) (removed in mature form).

Belongs to the G-protein coupled receptor 1 family. Interacts (non-isoprenylated C-terminus) with PDZK1. In terms of processing, isoprenylation does not influence ligand binding but is required for efficient coupling to the effectors adenylyl cyclase and phospholipase C.

It is found in the cell membrane. Receptor for prostacyclin (prostaglandin I2 or PGI2). The activity of this receptor is mediated by G(s) proteins which activate adenylate cyclase. The polypeptide is Prostacyclin receptor (Ptgir) (Mus musculus (Mouse)).